Reading from the N-terminus, the 348-residue chain is Macrophage-capping protein (348 aa).

Methionine 1 carries the N-acetylmethionine modification. A Gelsolin-like 1 repeat occupies glutamate 27–glycine 75. The Nuclear localization signal signature appears at lysine 137–lysine 146. 2 Gelsolin-like repeats span residues isoleucine 148–asparagine 188 and methionine 261–glutamine 307. The residue at position 337 (serine 337) is a Phosphoserine.

This sequence belongs to the villin/gelsolin family. In terms of assembly, interacts with NUP62. Interacts with NUTF2 and RAN; involved in CAPG nuclear import. Post-translationally, the N-terminus is blocked. As to expression, macrophages and macrophage-like cells.

Its subcellular location is the nucleus. It localises to the cytoplasm. It is found in the melanosome. The protein localises to the cell projection. The protein resides in the lamellipodium. Its subcellular location is the ruffle. In terms of biological role, calcium-sensitive protein which reversibly blocks the barbed ends of actin filaments but does not sever preformed actin filaments. May play an important role in macrophage function. May play a role in regulating cytoplasmic and/or nuclear structures through potential interactions with actin. May bind DNA. In Homo sapiens (Human), this protein is Macrophage-capping protein (CAPG).